Consider the following 671-residue polypeptide: DNA ligase (671 aa).

NAD(+) contacts are provided by residues 36–40 (DAEYD), 85–86 (SL), and E116. K118 serves as the catalytic N6-AMP-lysine intermediate. R139, E176, K292, and K316 together coordinate NAD(+). C410, C413, C428, and C434 together coordinate Zn(2+). Positions 591–671 (QKGGRFQGMT…QFLAMFSEKE (81 aa)) constitute a BRCT domain.

Belongs to the NAD-dependent DNA ligase family. LigA subfamily. Mg(2+) serves as cofactor. It depends on Mn(2+) as a cofactor.

It carries out the reaction NAD(+) + (deoxyribonucleotide)n-3'-hydroxyl + 5'-phospho-(deoxyribonucleotide)m = (deoxyribonucleotide)n+m + AMP + beta-nicotinamide D-nucleotide.. DNA ligase that catalyzes the formation of phosphodiester linkages between 5'-phosphoryl and 3'-hydroxyl groups in double-stranded DNA using NAD as a coenzyme and as the energy source for the reaction. It is essential for DNA replication and repair of damaged DNA. The protein is DNA ligase of Acidithiobacillus ferrooxidans (strain ATCC 23270 / DSM 14882 / CIP 104768 / NCIMB 8455) (Ferrobacillus ferrooxidans (strain ATCC 23270)).